The primary structure comprises 177 residues: Ferritin heavy chain, oocyte isoform (177 aa).

Residues 7–156 (QNFHQECEAA…DHITNLRRMG (150 aa)) form the Ferritin-like diiron domain. Fe cation is bound by residues E24, E59, H62, E104, and Q138.

This sequence belongs to the ferritin family. Oligomer of 24 subunits. There are two types of subunits: L (light) chain and H (heavy) chain. The functional molecule is roughly spherical and contains a central cavity into which the insoluble mineral iron core is deposited.

The protein resides in the cytoplasm. The enzyme catalyses 4 Fe(2+) + O2 + 4 H(+) = 4 Fe(3+) + 2 H2O. In terms of biological role, stores iron in a soluble, non-toxic, readily available form. Important for iron homeostasis. Has ferroxidase activity. Iron is taken up in the ferrous form and deposited as ferric hydroxides after oxidation. This chain is Ferritin heavy chain, oocyte isoform, found in Xenopus laevis (African clawed frog).